The chain runs to 195 residues: MNTILTKLKDFVGISEHDDEYETDYEEMEYDRYSKTNSSETLAPEEEEPIRNRRTRESLNLTSDVPMGTTTRNNVIGMPGITNGIAEVVVIEPHSFEEMPQVIQTLRERKSVVLNLNVMDPEEAQRAVDFVAGGTYAIDGHQERIGESIFLFTPSCVKVSTLTGTVHDVPETPKATTRPTMSTPVWGAEASRIAQ.

Residues 32–54 (RYSKTNSSETLAPEEEEPIRNRR) form a disordered region.

This sequence belongs to the SepF family. In terms of assembly, homodimer. Interacts with FtsZ.

It localises to the cytoplasm. Functionally, cell division protein that is part of the divisome complex and is recruited early to the Z-ring. Probably stimulates Z-ring formation, perhaps through the cross-linking of FtsZ protofilaments. Its function overlaps with FtsA. In Gloeothece citriformis (strain PCC 7424) (Cyanothece sp. (strain PCC 7424)), this protein is Cell division protein SepF.